The sequence spans 682 residues: K(+)-insensitive pyrophosphate-energized proton pump 2 (682 aa).

The next 5 helical transmembrane spans lie at 1 to 21, 56 to 76, 78 to 98, 130 to 150, and 160 to 180; these read MELF…ALYM, TIAG…RQYH, AVAF…GMYV, LAVT…FGGA, and IVGF…SGGI. Lys-183 lines the substrate pocket. Positions 186, 190, and 216 each coordinate Mg(2+). Transmembrane regions (helical) follow at residues 237–257, 258–278, 291–311, 318–338, 353–373, 375–395, and 404–424; these read IGAM…GIVF, PLVA…FVRA, GYIV…RYML, FIYF…FVLI, IARA…AVGF, STAL…WLGL, and LYGT…ILAM. Position 432 (Asp-432) interacts with Mg(2+). The next 4 membrane-spanning stretches (helical) occupy residues 468 to 488, 506 to 526, 574 to 594, and 595 to 615; these read YAIG…IDEV, EVFV…STAI, MVLP…VLKA, and EAAA…ALFL. Positions 623, 649, and 653 each coordinate Ca(2+). Lys-656 is a substrate binding site. The chain crosses the membrane as a helical span at residues 662 to 682; that stretch reads SLHVLVKLISTITLVLAGLFI.

It belongs to the H(+)-translocating pyrophosphatase (TC 3.A.10) family. K(+)-insensitive subfamily. As to quaternary structure, homodimer. Mg(2+) serves as cofactor.

Its subcellular location is the cell membrane. The catalysed reaction is diphosphate + H2O + H(+)(in) = 2 phosphate + 2 H(+)(out). Its function is as follows. Proton pump that utilizes the energy of pyrophosphate hydrolysis as the driving force for proton movement across the membrane. Generates a proton motive force. This chain is K(+)-insensitive pyrophosphate-energized proton pump 2, found in Moorella thermoacetica (strain ATCC 39073 / JCM 9320).